The primary structure comprises 161 residues: Aklanonic acid methyl ester cyclase DauD (161 aa).

Glutamine 106 serves as a coordination point for substrate. The segment at 137-161 (WPTPEGWRPCPPPPRRRHDRSTDTP) is disordered.

This sequence belongs to the polyketide cyclase DnrD family. Homotetramer.

The enzyme catalyses methyl aklanonate = aklaviketone. It functions in the pathway antibiotic biosynthesis; daunorubicin biosynthesis. Its pathway is antibiotic biosynthesis; carminomycin biosynthesis. The protein operates within antibiotic biosynthesis; rhodomycin biosynthesis. It participates in antibiotic biosynthesis; aclacinomycin biosynthesis. Its function is as follows. Involved in the biosynthesis of aklavinone which is an important precursor common to the formation of the clinically significant anthracyclines such as carminomycin, daunorubicin (daunomycin), rhodomycin, aclacinomycin T (aklavin) and aclacinomycin A (aclarubicin). These compounds are aromatic polyketide antibiotics that exhibit high cytotoxicity and are widely applied in the chemotherapy of a variety of cancers. Catalyzes the cyclization of aklanonic acid methyl ester to yield aklaviketone. The sequence is that of Aklanonic acid methyl ester cyclase DauD (dauD) from Streptomyces sp. (strain C5).